The following is a 283-amino-acid chain: Protease HtpX (283 aa).

The next 2 helical transmembrane spans lie at 4 to 24 (ILLFLATNMAVMLVLGIILNV) and 33 to 53 (GGILIMALLFGFAGSLISLFL). His-139 lines the Zn(2+) pocket. Glu-140 is an active-site residue. His-143 is a binding site for Zn(2+). The next 2 helical transmembrane spans lie at 147–167 (GDMVTMALLQGVLNTFVIFLS) and 190–210 (IYFLVSMVLEMLFGVLASIIA). Glu-218 contributes to the Zn(2+) binding site.

This sequence belongs to the peptidase M48B family. Zn(2+) is required as a cofactor.

The protein localises to the cell inner membrane. This Haemophilus influenzae (strain 86-028NP) protein is Protease HtpX.